The primary structure comprises 94 residues: Small ribosomal subunit protein bS6 (94 aa).

Belongs to the bacterial ribosomal protein bS6 family.

Functionally, binds together with bS18 to 16S ribosomal RNA. The sequence is that of Small ribosomal subunit protein bS6 from Clostridium botulinum (strain Loch Maree / Type A3).